A 340-amino-acid chain; its full sequence is Probable dual-specificity RNA methyltransferase RlmN (340 aa).

E93 serves as the catalytic Proton acceptor. The region spanning T99–E327 is the Radical SAM core domain. C106 and C332 are disulfide-bonded. 3 residues coordinate [4Fe-4S] cluster: C113, C117, and C120. S-adenosyl-L-methionine-binding positions include G160–E161, S190, S213–H215, and N289. C332 acts as the S-methylcysteine intermediate in catalysis.

Belongs to the radical SAM superfamily. RlmN family. The cofactor is [4Fe-4S] cluster.

Its subcellular location is the cytoplasm. It catalyses the reaction adenosine(2503) in 23S rRNA + 2 reduced [2Fe-2S]-[ferredoxin] + 2 S-adenosyl-L-methionine = 2-methyladenosine(2503) in 23S rRNA + 5'-deoxyadenosine + L-methionine + 2 oxidized [2Fe-2S]-[ferredoxin] + S-adenosyl-L-homocysteine. The enzyme catalyses adenosine(37) in tRNA + 2 reduced [2Fe-2S]-[ferredoxin] + 2 S-adenosyl-L-methionine = 2-methyladenosine(37) in tRNA + 5'-deoxyadenosine + L-methionine + 2 oxidized [2Fe-2S]-[ferredoxin] + S-adenosyl-L-homocysteine. In terms of biological role, specifically methylates position 2 of adenine 2503 in 23S rRNA and position 2 of adenine 37 in tRNAs. This Rippkaea orientalis (strain PCC 8801 / RF-1) (Cyanothece sp. (strain PCC 8801)) protein is Probable dual-specificity RNA methyltransferase RlmN.